A 403-amino-acid polypeptide reads, in one-letter code: Protein LAZ1 homolog 2 (403 aa).

The next 6 helical transmembrane spans lie at 16 to 36 (SLII…YSIL), 50 to 70 (WIVS…ISLS), 162 to 182 (MILK…GVYG), 191 to 211 (GYPY…FCLV), 236 to 256 (IVFA…YGIL), and 269 to 289 (FLIC…FPAE). The tract at residues 381-403 (SDGKEETEVTEEVTVETSVPPKE) is disordered.

Belongs to the TMEM184 family.

It is found in the membrane. The protein is Protein LAZ1 homolog 2 of Arabidopsis thaliana (Mouse-ear cress).